The primary structure comprises 246 residues: 3-oxoacyl-[acyl-carrier-protein] reductase FabG (246 aa).

NADP(+) is bound by residues 11–14 (GASR), S36, 62–63 (DV), and N89. S141 lines the substrate pocket. Y154 (proton acceptor) is an active-site residue. NADP(+)-binding positions include 154 to 158 (YVAAK) and I187.

The protein belongs to the short-chain dehydrogenases/reductases (SDR) family. In terms of assembly, homotetramer.

The catalysed reaction is a (3R)-hydroxyacyl-[ACP] + NADP(+) = a 3-oxoacyl-[ACP] + NADPH + H(+). Its pathway is lipid metabolism; fatty acid biosynthesis. Its function is as follows. Catalyzes the NADPH-dependent reduction of beta-ketoacyl-ACP substrates to beta-hydroxyacyl-ACP products, the first reductive step in the elongation cycle of fatty acid biosynthesis. The polypeptide is 3-oxoacyl-[acyl-carrier-protein] reductase FabG (fabG) (Bacillus subtilis (strain 168)).